We begin with the raw amino-acid sequence, 645 residues long: Glucans biosynthesis glucosyltransferase H (645 aa).

Positions 1 to 28 are disordered; that stretch reads MDGTVTLSPAPTDLPPVSSLDAGQPTLP. The next 7 membrane-spanning stretches (helical) occupy residues 64–84, 98–118, 423–443, 465–485, 504–524, 558–578, and 580–600; these read LIGGTLTATAVAVWVMLSVLW, LFVLLFAWIAMSFASAVAGFI, APMWGMLMLVGIGIPLAGAGI, AIWIFVCTMFVLLAPKLLGYI, ALSILLETVLAALMAPVVMYL, SYGGLSVFGLFMGTLAYLVSP, and LAAWMAPVIVGMVVSIPVVAV.

It belongs to the glycosyltransferase 2 family. OpgH subfamily.

Its subcellular location is the cell inner membrane. It functions in the pathway glycan metabolism; osmoregulated periplasmic glucan (OPG) biosynthesis. In terms of biological role, involved in the biosynthesis of osmoregulated periplasmic glucans (OPGs). The sequence is that of Glucans biosynthesis glucosyltransferase H from Xanthomonas campestris pv. campestris (strain 8004).